The primary structure comprises 473 residues: Aspartyl/glutamyl-tRNA(Asn/Gln) amidotransferase subunit B (473 aa).

It belongs to the GatB/GatE family. GatB subfamily. Heterotrimer of A, B and C subunits.

The enzyme catalyses L-glutamyl-tRNA(Gln) + L-glutamine + ATP + H2O = L-glutaminyl-tRNA(Gln) + L-glutamate + ADP + phosphate + H(+). The catalysed reaction is L-aspartyl-tRNA(Asn) + L-glutamine + ATP + H2O = L-asparaginyl-tRNA(Asn) + L-glutamate + ADP + phosphate + 2 H(+). Functionally, allows the formation of correctly charged Asn-tRNA(Asn) or Gln-tRNA(Gln) through the transamidation of misacylated Asp-tRNA(Asn) or Glu-tRNA(Gln) in organisms which lack either or both of asparaginyl-tRNA or glutaminyl-tRNA synthetases. The reaction takes place in the presence of glutamine and ATP through an activated phospho-Asp-tRNA(Asn) or phospho-Glu-tRNA(Gln). The chain is Aspartyl/glutamyl-tRNA(Asn/Gln) amidotransferase subunit B from Francisella tularensis subsp. tularensis (strain FSC 198).